The chain runs to 103 residues: Seminal ribonuclease (103 aa).

4 cysteine pairs are disulfide-bonded: C12–C70, C26–C81, C44–C96, and C51–C58. Substrate-binding positions include 27 to 31 (KLVNT), K52, and R71.

It belongs to the pancreatic ribonuclease family. As to quaternary structure, homodimer; disulfide-linked.

It is found in the secreted. It carries out the reaction an [RNA] containing cytidine + H2O = an [RNA]-3'-cytidine-3'-phosphate + a 5'-hydroxy-ribonucleotide-3'-[RNA].. The enzyme catalyses an [RNA] containing uridine + H2O = an [RNA]-3'-uridine-3'-phosphate + a 5'-hydroxy-ribonucleotide-3'-[RNA].. This enzyme hydrolyzes both single- and double-stranded RNA. This chain is Seminal ribonuclease (SRN), found in Cephalophus silvicultor (Yellow-backed duiker).